The primary structure comprises 208 residues: 3-isopropylmalate dehydratase small subunit (208 aa).

It belongs to the LeuD family. LeuD type 1 subfamily. As to quaternary structure, heterodimer of LeuC and LeuD.

It catalyses the reaction (2R,3S)-3-isopropylmalate = (2S)-2-isopropylmalate. It functions in the pathway amino-acid biosynthesis; L-leucine biosynthesis; L-leucine from 3-methyl-2-oxobutanoate: step 2/4. Functionally, catalyzes the isomerization between 2-isopropylmalate and 3-isopropylmalate, via the formation of 2-isopropylmaleate. In Cupriavidus necator (Alcaligenes eutrophus), this protein is 3-isopropylmalate dehydratase small subunit (leuD).